Here is a 213-residue protein sequence, read N- to C-terminus: GTP cyclohydrolase 1 (213 aa).

Residues cysteine 104, histidine 107, and cysteine 175 each coordinate Zn(2+).

Belongs to the GTP cyclohydrolase I family. In terms of assembly, homomer.

The enzyme catalyses GTP + H2O = 7,8-dihydroneopterin 3'-triphosphate + formate + H(+). Its pathway is cofactor biosynthesis; 7,8-dihydroneopterin triphosphate biosynthesis; 7,8-dihydroneopterin triphosphate from GTP: step 1/1. This Brucella canis (strain ATCC 23365 / NCTC 10854 / RM-666) protein is GTP cyclohydrolase 1.